We begin with the raw amino-acid sequence, 452 residues long: Probable ECA polymerase (452 aa).

The next 11 helical transmembrane spans lie at 6 to 26, 37 to 57, 63 to 83, 118 to 138, 155 to 175, 181 to 201, 207 to 227, 228 to 248, 341 to 361, 378 to 398, and 410 to 430; these read FSGL…LTWF, VFFS…TSVL, VGVA…CFYG, VILM…NGFL, GVAL…VYFL, AWLF…MIVG, IIIA…ISLW, MLAA…LKRY, LVVM…GMII, YKAA…IVLA, and VFFL…FWLF.

Belongs to the WzyE family. In terms of assembly, probably part of a complex composed of WzxE, WzyE and WzzE.

It is found in the cell inner membrane. Its pathway is bacterial outer membrane biogenesis; enterobacterial common antigen biosynthesis. In terms of biological role, probably involved in the polymerization of enterobacterial common antigen (ECA) trisaccharide repeat units. The chain is Probable ECA polymerase from Salmonella newport (strain SL254).